Consider the following 225-residue polypeptide: Heptaprenylglyceryl phosphate synthase (225 aa).

A sn-glycerol 1-phosphate-binding site is contributed by Lys6. 2 residues coordinate Mg(2+): Asp8 and Thr34. Sn-glycerol 1-phosphate-binding positions include 153 to 158 (YVEYSG), Gly183, and 203 to 204 (GN).

Belongs to the GGGP/HepGP synthase family. Group I subfamily. In terms of assembly, homodimer. The cofactor is Mg(2+).

It carries out the reaction sn-glycerol 1-phosphate + all-trans-heptaprenyl diphosphate = 3-heptaprenyl-sn-glycero-1-phosphate + diphosphate. Its pathway is membrane lipid metabolism; glycerophospholipid metabolism. In terms of biological role, prenyltransferase that catalyzes in vivo the transfer of the heptaprenyl moiety of heptaprenyl pyrophosphate (HepPP; 35 carbon atoms) to the C3 hydroxyl of sn-glycerol-1-phosphate (G1P), producing heptaprenylglyceryl phosphate (HepGP). This reaction is an ether-bond-formation step in the biosynthesis of archaea-type G1P-based membrane lipids found in Bacillales. This Listeria innocua serovar 6a (strain ATCC BAA-680 / CLIP 11262) protein is Heptaprenylglyceryl phosphate synthase.